A 351-amino-acid chain; its full sequence is Ferredoxin--NADP reductase (351 aa).

Residues D44, Q52, Y57, I97, F132, D296, and S337 each coordinate FAD.

This sequence belongs to the ferredoxin--NADP reductase type 2 family. Homodimer. FAD serves as cofactor.

It catalyses the reaction 2 reduced [2Fe-2S]-[ferredoxin] + NADP(+) + H(+) = 2 oxidized [2Fe-2S]-[ferredoxin] + NADPH. This chain is Ferredoxin--NADP reductase, found in Burkholderia vietnamiensis (strain G4 / LMG 22486) (Burkholderia cepacia (strain R1808)).